We begin with the raw amino-acid sequence, 178 residues long: Large ribosomal subunit protein uL6 (178 aa).

This sequence belongs to the universal ribosomal protein uL6 family. Part of the 50S ribosomal subunit.

Functionally, this protein binds to the 23S rRNA, and is important in its secondary structure. It is located near the subunit interface in the base of the L7/L12 stalk, and near the tRNA binding site of the peptidyltransferase center. The polypeptide is Large ribosomal subunit protein uL6 (Bacillus licheniformis (strain ATCC 14580 / DSM 13 / JCM 2505 / CCUG 7422 / NBRC 12200 / NCIMB 9375 / NCTC 10341 / NRRL NRS-1264 / Gibson 46)).